Here is a 385-residue protein sequence, read N- to C-terminus: Ribosomal RNA large subunit methyltransferase G (385 aa).

Belongs to the methyltransferase superfamily. RlmG family.

Its subcellular location is the cytoplasm. It carries out the reaction guanosine(1835) in 23S rRNA + S-adenosyl-L-methionine = N(2)-methylguanosine(1835) in 23S rRNA + S-adenosyl-L-homocysteine + H(+). In terms of biological role, specifically methylates the guanine in position 1835 (m2G1835) of 23S rRNA. The polypeptide is Ribosomal RNA large subunit methyltransferase G (Vibrio campbellii (strain ATCC BAA-1116)).